Consider the following 54-residue polypeptide: Lectin alpha chain (54 aa).

The protein belongs to the leguminous lectin family. In terms of assembly, tetramer of two alpha and two beta chains.

This Lathyrus tingitanus (Tangier pea) protein is Lectin alpha chain.